Here is a 427-residue protein sequence, read N- to C-terminus: uncharacterized protein (427 aa).

Residues 135–168 (PILKQKLVSLESKVKKIDKEMEKHNDLLKEIQEN) adopt a coiled-coil conformation.

This is an uncharacterized protein from Arabidopsis thaliana (Mouse-ear cress).